The following is a 200-amino-acid chain: Large ribosomal subunit protein bL25 (200 aa).

Positions 1 to 20 are disordered; it reads MEARELKANVRKESGKEQAR.

It belongs to the bacterial ribosomal protein bL25 family. CTC subfamily. Part of the 50S ribosomal subunit; part of the 5S rRNA/L5/L18/L25 subcomplex. Contacts the 5S rRNA. Binds to the 5S rRNA independently of L5 and L18.

This is one of the proteins that binds to the 5S RNA in the ribosome where it forms part of the central protuberance. This Syntrophus aciditrophicus (strain SB) protein is Large ribosomal subunit protein bL25.